Reading from the N-terminus, the 36-residue chain is Mu/kappa-theraphotoxin-Ap1a (36 aa).

3 cysteine pairs are disulfide-bonded: Cys-3-Cys-18, Cys-10-Cys-23, and Cys-17-Cys-30. The residue at position 36 (Phe-36) is a Phenylalanine amide.

The protein belongs to the neurotoxin 10 (Hwtx-1) family. As to expression, expressed by the venom gland.

It localises to the secreted. Its function is as follows. Inhibitor of voltage-gated potassium and sodium channels. Among other potassium channels, it selectively inhibits Kv10.1/KCNH1/EAG1 (IC(50)=236 nM) by shifting the voltage dependence of channel activation in a depolarising direction, it shows a maximum inhibition of 80% at saturating concentrations, it shows fast on-rates, and is poorly reversible. It also slightly affects channel inactivation, when the membrane is highly depolarised (&gt;+80 mV). It shows similar potency on Nav1.7/SCN9A (IC(50)=222 nM) and lower potency on Nav1.2/SCN2A (IC(50)=519 nM). This is Mu/kappa-theraphotoxin-Ap1a from Avicularia purpurea (Ecuadorian purple pinktoe tarantula).